The sequence spans 974 residues: UvrABC system protein A (974 aa).

34–41 (GLSGSGKS) contacts ATP. 2 consecutive ABC transporter domains span residues 331-610 (WARS…TNSL) and 630-959 (ISKT…QFLK). 663-670 (GVSGGGKS) contacts ATP. A C4-type zinc finger spans residues 762–788 (CEACQGDGVIKIEMHFLPDVYVTCDVC).

It belongs to the ABC transporter superfamily. UvrA family. In terms of assembly, forms a heterotetramer with UvrB during the search for lesions.

It localises to the cytoplasm. Functionally, the UvrABC repair system catalyzes the recognition and processing of DNA lesions. UvrA is an ATPase and a DNA-binding protein. A damage recognition complex composed of 2 UvrA and 2 UvrB subunits scans DNA for abnormalities. When the presence of a lesion has been verified by UvrB, the UvrA molecules dissociate. The chain is UvrABC system protein A from Brucella abortus (strain 2308).